The following is a 564-amino-acid chain: Efflux pump DEP3 (564 aa).

Polar residues predominate over residues 1–12 (MVYSSTSSSQNR). The disordered stretch occupies residues 1–48 (MVYSSTSSSQNRPDGEKHVEAVGSSTRIPSDELVDRGGGDTTTGKQSP). Over residues 29 to 38 (PSDELVDRGG) the composition is skewed to basic and acidic residues. 14 helical membrane passes run 65–85 (STTL…PAII), 91–111 (LELL…ILLW), 122–142 (WVYI…GAAP), 152–172 (VIAG…VSVL), 185–205 (STVV…AFAA), 212–232 (WGFY…FLLF), 255–275 (AVIF…GGVV), 281–301 (GTVI…IVLL), 332–352 (FLSS…FQFI), 362–382 (VRLL…GFLM), 386–406 (GLIP…TALM), 423–443 (ILIG…VQSL), 452–472 (AVGA…AISG), and 528–548 (TIWA…FPLL).

The protein belongs to the major facilitator superfamily. TCR/Tet family.

The protein resides in the cell membrane. Functionally, efflux pump; part of the gene cluster that mediates the biosynthesis of depudecin, a highly oxidized eleven-carbon linear polyketide that acts as a histone deacetylase (HDAC) inhibitor and makes a small contribution to pathogenesis. Is presumed either to be responsible for exporting depudecin, to provide self-protection, or both. This is Efflux pump DEP3 from Alternaria brassicicola (Dark leaf spot agent).